Reading from the N-terminus, the 445-residue chain is 3-phosphoshikimate 1-carboxyvinyltransferase (445 aa).

A disordered region spans residues 1-25 (MSHSDQTSPLEARKSAALSGTARVP). 3-phosphoshikimate is bound by residues Lys28, Ser29, and Arg33. A phosphoenolpyruvate-binding site is contributed by Lys28. Gly101 and Arg129 together coordinate phosphoenolpyruvate. Ser175, Gln177, Asp328, and Lys355 together coordinate 3-phosphoshikimate. Residue Gln177 coordinates phosphoenolpyruvate. Asp328 acts as the Proton acceptor in catalysis. Residues Arg359 and Arg402 each contribute to the phosphoenolpyruvate site.

The protein belongs to the EPSP synthase family. Monomer.

It is found in the cytoplasm. The catalysed reaction is 3-phosphoshikimate + phosphoenolpyruvate = 5-O-(1-carboxyvinyl)-3-phosphoshikimate + phosphate. It functions in the pathway metabolic intermediate biosynthesis; chorismate biosynthesis; chorismate from D-erythrose 4-phosphate and phosphoenolpyruvate: step 6/7. Functionally, catalyzes the transfer of the enolpyruvyl moiety of phosphoenolpyruvate (PEP) to the 5-hydroxyl of shikimate-3-phosphate (S3P) to produce enolpyruvyl shikimate-3-phosphate and inorganic phosphate. This chain is 3-phosphoshikimate 1-carboxyvinyltransferase, found in Rhodopseudomonas palustris (strain BisB5).